Here is a 348-residue protein sequence, read N- to C-terminus: S-adenosylmethionine:tRNA ribosyltransferase-isomerase (348 aa).

This sequence belongs to the QueA family. Monomer.

The protein localises to the cytoplasm. It carries out the reaction 7-aminomethyl-7-carbaguanosine(34) in tRNA + S-adenosyl-L-methionine = epoxyqueuosine(34) in tRNA + adenine + L-methionine + 2 H(+). Its pathway is tRNA modification; tRNA-queuosine biosynthesis. Transfers and isomerizes the ribose moiety from AdoMet to the 7-aminomethyl group of 7-deazaguanine (preQ1-tRNA) to give epoxyqueuosine (oQ-tRNA). The protein is S-adenosylmethionine:tRNA ribosyltransferase-isomerase of Polynucleobacter asymbioticus (strain DSM 18221 / CIP 109841 / QLW-P1DMWA-1) (Polynucleobacter necessarius subsp. asymbioticus).